The chain runs to 99 residues: Integration host factor subunit alpha (99 aa).

Belongs to the bacterial histone-like protein family. In terms of assembly, heterodimer of an alpha and a beta chain.

Functionally, this protein is one of the two subunits of integration host factor, a specific DNA-binding protein that functions in genetic recombination as well as in transcriptional and translational control. This is Integration host factor subunit alpha from Pseudoalteromonas translucida (strain TAC 125).